Consider the following 133-residue polypeptide: Agouti-signaling protein (133 aa).

Residues 1–22 form the signal peptide; it reads MDVSRLLLATLLVCLCFLTAYS. N39 is a glycosylation site (N-linked (GlcNAc...) asparagine). Residues 56 to 95 are disordered; the sequence is NKKSKKISRNEAEKKKRPSKRKAPMKNVARTRPPPPTPCV. Residues 70–79 are compositionally biased toward basic residues; that stretch reads KKRPSKRKAP. Disulfide bonds link C94/C109, C101/C115, C108/C126, C112/C133, and C117/C124. Residues 94–133 enclose the Agouti domain; the sequence is CVATRDSCKPPAPACCDPCAFCQCRFFRSACSCRVLNPTC.

Its subcellular location is the secreted. Its function is as follows. Involved in the regulation of melanogenesis. The binding of ASP to MC1R precludes alpha-MSH initiated signaling and thus blocks production of cAMP, leading to a down-regulation of eumelanogenesis (brown/black pigment) and thus increasing synthesis of pheomelanin (yellow/red pigment). The sequence is that of Agouti-signaling protein (ASIP) from Bos taurus (Bovine).